Here is a 525-residue protein sequence, read N- to C-terminus: GMP synthase [glutamine-hydrolyzing] (525 aa).

A Glutamine amidotransferase type-1 domain is found at 9–207; that stretch reads RILILDFGSQ…ILDICGCEAL (199 aa). Cys-86 acts as the Nucleophile in catalysis. Residues His-181 and Glu-183 contribute to the active site. Positions 208-400 constitute a GMPS ATP-PPase domain; the sequence is WTPSKIAEDA…LGLPYDMVYR (193 aa). 235 to 241 is an ATP binding site; that stretch reads SGGVDSS.

In terms of assembly, homodimer.

The catalysed reaction is XMP + L-glutamine + ATP + H2O = GMP + L-glutamate + AMP + diphosphate + 2 H(+). The protein operates within purine metabolism; GMP biosynthesis; GMP from XMP (L-Gln route): step 1/1. Its function is as follows. Catalyzes the synthesis of GMP from XMP. The sequence is that of GMP synthase [glutamine-hydrolyzing] from Pseudomonas savastanoi pv. phaseolicola (strain 1448A / Race 6) (Pseudomonas syringae pv. phaseolicola (strain 1448A / Race 6)).